The sequence spans 182 residues: Thymidine kinase (182 aa).

8–15 (GPMFSGKT) is an ATP binding site. Glu85 (proton acceptor) is an active-site residue. A substrate-binding site is contributed by Phe117. Positions 142 and 145 each coordinate Zn(2+). 161–165 (IIEIG) is a substrate binding site. 2 residues coordinate Zn(2+): Cys174 and Cys177.

Belongs to the thymidine kinase family.

It catalyses the reaction thymidine + ATP = dTMP + ADP + H(+). The protein is Thymidine kinase (TK) of Amsacta moorei entomopoxvirus (AmEPV).